A 241-amino-acid polypeptide reads, in one-letter code: NADPH-dependent FMN reductase ArsH (241 aa).

Residue 43-50 participates in FMN binding; that stretch reads SLRTVSYS.

It belongs to the ArsH family. Homotetramer. It depends on FMN as a cofactor.

In terms of biological role, has NADPH-dependent FMN reductase activity. No activity with NADH. May play a role in resistance to heavy metal toxicity. This chain is NADPH-dependent FMN reductase ArsH, found in Rhizobium meliloti (strain 1021) (Ensifer meliloti).